The chain runs to 207 residues: Urease accessory protein UreG (207 aa).

GTP is bound at residue 14–21; sequence GPVGSGKT.

It belongs to the SIMIBI class G3E GTPase family. UreG subfamily. Homodimer. UreD, UreF and UreG form a complex that acts as a GTP-hydrolysis-dependent molecular chaperone, activating the urease apoprotein by helping to assemble the nickel containing metallocenter of UreC. The UreE protein probably delivers the nickel.

The protein localises to the cytoplasm. Functionally, facilitates the functional incorporation of the urease nickel metallocenter. This process requires GTP hydrolysis, probably effectuated by UreG. In Pseudomonas putida (strain GB-1), this protein is Urease accessory protein UreG.